A 60-amino-acid polypeptide reads, in one-letter code: Large ribosomal subunit protein bL33 (60 aa).

This sequence belongs to the bacterial ribosomal protein bL33 family.

In Chlorobium limicola (strain DSM 245 / NBRC 103803 / 6330), this protein is Large ribosomal subunit protein bL33.